The following is a 571-amino-acid chain: Proline--tRNA ligase (571 aa).

It belongs to the class-II aminoacyl-tRNA synthetase family. ProS type 1 subfamily. In terms of assembly, homodimer.

It is found in the cytoplasm. The catalysed reaction is tRNA(Pro) + L-proline + ATP = L-prolyl-tRNA(Pro) + AMP + diphosphate. Its function is as follows. Catalyzes the attachment of proline to tRNA(Pro) in a two-step reaction: proline is first activated by ATP to form Pro-AMP and then transferred to the acceptor end of tRNA(Pro). As ProRS can inadvertently accommodate and process non-cognate amino acids such as alanine and cysteine, to avoid such errors it has two additional distinct editing activities against alanine. One activity is designated as 'pretransfer' editing and involves the tRNA(Pro)-independent hydrolysis of activated Ala-AMP. The other activity is designated 'posttransfer' editing and involves deacylation of mischarged Ala-tRNA(Pro). The misacylated Cys-tRNA(Pro) is not edited by ProRS. This Aliivibrio fischeri (strain MJ11) (Vibrio fischeri) protein is Proline--tRNA ligase.